The following is a 329-amino-acid chain: Phosphate acyltransferase (329 aa).

The protein belongs to the PlsX family. Homodimer. Probably interacts with PlsY.

It is found in the cytoplasm. It catalyses the reaction a fatty acyl-[ACP] + phosphate = an acyl phosphate + holo-[ACP]. It functions in the pathway lipid metabolism; phospholipid metabolism. Its function is as follows. Catalyzes the reversible formation of acyl-phosphate (acyl-PO(4)) from acyl-[acyl-carrier-protein] (acyl-ACP). This enzyme utilizes acyl-ACP as fatty acyl donor, but not acyl-CoA. This chain is Phosphate acyltransferase, found in Geobacillus sp. (strain WCH70).